The sequence spans 342 residues: uncharacterized protein (342 aa).

The next 10 helical transmembrane spans lie at 8-28, 39-59, 79-99, 108-128, 142-162, 175-195, 207-227, 242-262, 276-296, and 304-324; these read FESSWFAAVMGTGVLAVTSLF, ISFLLFYFNILLFFVFLMLWI, SSFSPTVAVAMLVLGIDFILI, IFWVFGAIGMFLFSLIVPFYM, GWYIPPVGLIVIPIAGSLIMP, INYFGWGAGFFLYLALLAVVI, AMAPTVWINLGPIGAGIVALI, FYIFSFIFWGFGLWWSLMAII, AMSWWAFIFPLGVYIASTHLV, and IVDYIGFGLYWLLFFFWIVTL.

It belongs to the tellurite-resistance/dicarboxylate transporter (TDT) family.

The protein resides in the cell membrane. This is an uncharacterized protein from Methanocaldococcus jannaschii (strain ATCC 43067 / DSM 2661 / JAL-1 / JCM 10045 / NBRC 100440) (Methanococcus jannaschii).